Here is a 488-residue protein sequence, read N- to C-terminus: Glutamyl-tRNA(Gln) amidotransferase subunit A (488 aa).

Catalysis depends on charge relay system residues K77 and S152. Residue S176 is the Acyl-ester intermediate of the active site.

The protein belongs to the amidase family. GatA subfamily. As to quaternary structure, heterotrimer of A, B and C subunits.

The catalysed reaction is L-glutamyl-tRNA(Gln) + L-glutamine + ATP + H2O = L-glutaminyl-tRNA(Gln) + L-glutamate + ADP + phosphate + H(+). Allows the formation of correctly charged Gln-tRNA(Gln) through the transamidation of misacylated Glu-tRNA(Gln) in organisms which lack glutaminyl-tRNA synthetase. The reaction takes place in the presence of glutamine and ATP through an activated gamma-phospho-Glu-tRNA(Gln). This is Glutamyl-tRNA(Gln) amidotransferase subunit A from Streptococcus pyogenes serotype M1.